A 640-amino-acid chain; its full sequence is Probable potassium transport system protein Kup 3 (640 aa).

Positions 1–15 (MTVDAAATPAEAPAT) are enriched in low complexity. The interval 1-20 (MTVDAAATPAEAPATNGHGD) is disordered. 12 helical membrane-spanning segments follow: residues 30–50 (LTLG…LYAL), 71–91 (VISL…VVIL), 117–137 (ASII…DAVI), 155–175 (AAFD…LFAV), 183–203 (VAAF…IAAF), 224–244 (FMLH…LAVT), 265–285 (WLFV…ALII), 294–314 (PFFL…ATVA), 363–383 (LLLA…ALAS), 385–405 (YGIS…VVIW), 410–430 (WSPL…LTFL), and 437–457 (VLEG…LMYT).

This sequence belongs to the HAK/KUP transporter (TC 2.A.72) family.

The protein localises to the cell inner membrane. The catalysed reaction is K(+)(in) + H(+)(in) = K(+)(out) + H(+)(out). Transport of potassium into the cell. Likely operates as a K(+):H(+) symporter. This Bradyrhizobium sp. (strain BTAi1 / ATCC BAA-1182) protein is Probable potassium transport system protein Kup 3.